The primary structure comprises 860 residues: MAASRSAGEAGPGGSQGRVVRMKRRGGRGPRRGPAGGGEKALKRLKLAVEEFVHATSEGEAPGGCEGRGAPVSFRPGGRKSRKELRKEKRHLRKARRLQRTAGPEQGPGLGGRSGAEEASGHRQDTEERARPAPSRDPSPPRKPRPSRVKAKATAATAKTRPSAAATAAARKRALLAANEEEDREIRKLERCLGLNKRKKKDGSSSVPLSFARDGLDYILGALESGKNSGLYDSSGEEEEDAGQTLPESDLESDSQDESEEEEEGDVEKEKKAQEAEAQSEDDDEDTEEEQGEEKEKGAQEKRRGKRVRFAEDEEKSENSSEDGDITDKSLCGSGEKYIPPHVRQAEETVDFKKKEELERLKKHVKGLLNRLSEPNMASISGQLEELYMAHSRKDMNDTLTSALMGACVTASAMPSRLMMEHVLLVSILHHTVGIEVGAHFLEAVVRKFDAIYKYGSEGKECDNLFTVIAHLYNFHVVQSLLIFDILKKLIGTFTEKDIELILLMLKNVGFSLRKDDALSLKELITEAQTKASGAGSEFQDQTRIRFMLETMLALKNNDMRKIPGYDPEPVEKLRKLQRALVRNAGSGSETQLRVSWDSVLSAEQTGRWWIVGSAWSGAPMIDNSHHTHLQKQLVGTVSSKILELARKQRMNTDIRRNIFCTIMTSEDFLDAFEKLLKLGLKDQQEREIIHVLMDCCLQEKTYNPFYAFLASKFCEYERRFQMTFQFSIWDKFRDLENLPATNFSNLVHLVAHLLKTKSLSLSILKVVEFSELDKPRVRFLRKVLSILLMETEVEDLSLIFTRVSDNPKLGVLREGLKLFISHFLLKNAQAHRSADEANVLREKADLATKCLQGKASLRM.

Disordered stretches follow at residues 1 to 172 (MAAS…AARK), 191 to 211 (RCLG…PLSF), and 226 to 339 (GKNS…EKYI). Positions 1-269 (MAASRSAGEA…EEEEEGDVEK (269 aa)) are necessary for nucleolar localization and for targeting PPP1CA to the nucleolus. Residues 20–31 (VRMKRRGGRGPR) are compositionally biased toward basic residues. Serine 57 carries the post-translational modification Phosphoserine. Over residues 77-99 (GGRKSRKELRKEKRHLRKARRLQ) the composition is skewed to basic residues. The segment covering 115-131 (GAEEASGHRQDTEERAR) has biased composition (basic and acidic residues). A Phosphoserine modification is found at serine 139. Positions 142-151 (RKPRPSRVKA) are enriched in basic residues. Low complexity predominate over residues 152–169 (KATAATAKTRPSAAATAA). Acidic residues-rich tracts occupy residues 249–267 (SDLE…EGDV) and 278–293 (AQSE…EQGE). The Required for efficient binding to PPP1CA and for targeting PPP1CA to the nucleolus motif lies at 307 to 310 (RVRF). Positions 312 to 325 (EDEEKSENSSEDGD) are enriched in acidic residues. A phosphoserine mark is found at serine 317, serine 320, and serine 321. Residues 362–559 (KKHVKGLLNR…ETMLALKNND (198 aa)) form the MIF4G domain. Residues 654–770 (DIRRNIFCTI…SLSILKVVEF (117 aa)) enclose the MI domain.

The protein belongs to the CWC22 family. As to quaternary structure, may interact with EIF4A1, EIF4A2 and EIF4A3. Interacts with PPP1CA and PPP1CC. Expressed in heart and skeletal muscle.

The protein resides in the nucleus. It localises to the nucleolus. Its function is as follows. Plays a role in targeting PPP1CA to the nucleolus. In Homo sapiens (Human), this protein is Nucleolar MIF4G domain-containing protein 1 (NOM1).